The primary structure comprises 150 residues: UPF0260 protein VIBHAR_03078 (150 aa).

It belongs to the UPF0260 family.

The protein is UPF0260 protein VIBHAR_03078 of Vibrio campbellii (strain ATCC BAA-1116).